The sequence spans 687 residues: Histone deacetylase clr3 (687 aa).

A histone deacetylase region spans residues Lys-55–Gly-385. His-195 is a catalytic residue.

This sequence belongs to the histone deacetylase family. HD type 2 subfamily. Interacts with ccq1, clr1, clr2 and mit1.

The protein localises to the nucleus. It is found in the chromosome. The protein resides in the centromere. It localises to the telomere. It catalyses the reaction N(6)-acetyl-L-lysyl-[histone] + H2O = L-lysyl-[histone] + acetate. Functionally, responsible for the deacetylation of lysine residues on the N-terminal part of the core histones (H2A, H2B, H3 and H4). Histone deacetylation gives a tag for epigenetic repression and plays an important role in transcriptional regulation, cell cycle progression and developmental events. Histone deacetylases act via the formation of large multiprotein complexes. Required for proper positioning of nucleosomes at heterochromatic loci and for transcriptional gene silencing (TGS) function of the Snf2/Hdac-containing repressor complex (SHREC). The polypeptide is Histone deacetylase clr3 (clr3) (Schizosaccharomyces pombe (strain 972 / ATCC 24843) (Fission yeast)).